The following is a 190-amino-acid chain: Elongation factor P-like protein (190 aa).

The protein belongs to the elongation factor P family.

This is Elongation factor P-like protein from Klebsiella pneumoniae (strain 342).